The sequence spans 139 residues: Ribosome-binding factor A (139 aa).

It belongs to the RbfA family. Monomer. Binds 30S ribosomal subunits, but not 50S ribosomal subunits or 70S ribosomes.

Its subcellular location is the cytoplasm. Functionally, one of several proteins that assist in the late maturation steps of the functional core of the 30S ribosomal subunit. Associates with free 30S ribosomal subunits (but not with 30S subunits that are part of 70S ribosomes or polysomes). Required for efficient processing of 16S rRNA. May interact with the 5'-terminal helix region of 16S rRNA. This chain is Ribosome-binding factor A, found in Methylobacterium sp. (strain 4-46).